We begin with the raw amino-acid sequence, 219 residues long: LexA repressor (219 aa).

The H-T-H motif DNA-binding region spans 28-48; it reads RAEIAAELGFRSANAAEEHLQ. Active-site for autocatalytic cleavage activity residues include S138 and K175.

It belongs to the peptidase S24 family. Homodimer.

The catalysed reaction is Hydrolysis of Ala-|-Gly bond in repressor LexA.. Functionally, represses a number of genes involved in the response to DNA damage (SOS response), including recA and lexA. In the presence of single-stranded DNA, RecA interacts with LexA causing an autocatalytic cleavage which disrupts the DNA-binding part of LexA, leading to derepression of the SOS regulon and eventually DNA repair. This Herminiimonas arsenicoxydans protein is LexA repressor.